The following is a 175-amino-acid chain: UPF0178 protein GOX1710 (175 aa).

This sequence belongs to the UPF0178 family.

This is UPF0178 protein GOX1710 from Gluconobacter oxydans (strain 621H) (Gluconobacter suboxydans).